The following is a 912-amino-acid chain: Protein translocase subunit SecA (912 aa).

ATP is bound by residues Gln87, 105–109 (GEGKT), and Asp512. Zn(2+) contacts are provided by Cys896, Cys898, Cys907, and His908.

The protein belongs to the SecA family. In terms of assembly, monomer and homodimer. Part of the essential Sec protein translocation apparatus which comprises SecA, SecYEG and auxiliary proteins SecDF-YajC and YidC. The cofactor is Zn(2+).

The protein resides in the cell inner membrane. It is found in the cytoplasm. It catalyses the reaction ATP + H2O + cellular proteinSide 1 = ADP + phosphate + cellular proteinSide 2.. In terms of biological role, part of the Sec protein translocase complex. Interacts with the SecYEG preprotein conducting channel. Has a central role in coupling the hydrolysis of ATP to the transfer of proteins into and across the cell membrane, serving both as a receptor for the preprotein-SecB complex and as an ATP-driven molecular motor driving the stepwise translocation of polypeptide chains across the membrane. This Pseudomonas fluorescens (strain Pf0-1) protein is Protein translocase subunit SecA.